The primary structure comprises 295 residues: Non-selective voltage-gated ion channel VDAC2 (295 aa).

ATP contacts are provided by Lys-24 and Lys-32. An N6-acetyllysine; alternate modification is found at Lys-32. Lys-32 bears the N6-succinyllysine; alternate mark. Lys-32 is covalently cross-linked (Glycyl lysine isopeptide (Lys-Gly) (interchain with G-Cter in ubiquitin); alternate). A run of 2 beta stranded transmembrane segments spans residues 38–45 (LVKLDVKT) and 51–60 (VEFSTSGSSN). Residue Lys-65 forms a Glycyl lysine isopeptide (Lys-Gly) (interchain with G-Cter in ubiquitin) linkage. Residues 66 to 76 (VSGTLETKYKW) traverse the membrane as a beta stranded segment. Tyr-79 is subject to Phosphotyrosine. 3 consecutive transmembrane segments (beta stranded) span residues 81-88 (LTFTEKWN), 92-100 (TLGTEIAIE), and 107-116 (LKLTFDTTFS). Thr-119 is subject to Phosphothreonine. Residue Lys-121 is modified to N6-acetyllysine; alternate. Residue Lys-121 forms a Glycyl lysine isopeptide (Lys-Gly) (interchain with G-Cter in ubiquitin); alternate linkage. Lys-122 participates in a covalent cross-link: Glycyl lysine isopeptide (Lys-Gly) (interchain with G-Cter in ubiquitin). 4 beta stranded membrane passes run 122–131 (KSGKIKSAYK), 135–144 (INLGCDVDFD), 148–157 (PAIHGSAVFG), and 161–170 (WLAGYQMTFD). Residue Lys-173 forms a Glycyl lysine isopeptide (Lys-Gly) (interchain with G-Cter in ubiquitin) linkage. The next 6 beta stranded transmembrane spans lie at 177–187 (TRSNFAVGYRT), 190–197 (FQLHTNVN), 201–210 (EFGGSIYQKV), 214–222 (FDTSVNLAW), 229–238 (TRFGIAAKYQ), and 243–250 (ASISAKVN). Position 252 is a phosphoserine (Ser-252). Residues 254–256 (LIG) and 272–276 (SALVD) contribute to the NAD(+) site. The next 2 membrane-spanning stretches (beta stranded) occupy residues 254–263 (LIGVGYTQTL) and 267–275 (VKLTLSALV). An N6-acetyllysine; alternate modification is found at Lys-278. A Glycyl lysine isopeptide (Lys-Gly) (interchain with G-Cter in ubiquitin); alternate cross-link involves residue Lys-278. The beta stranded transmembrane segment at 285–295 (HKLGLALELEA) threads the bilayer.

This sequence belongs to the eukaryotic mitochondrial porin family. As to quaternary structure, monomer, homodimer and higher order oligomers; formation of higher order structures is necessary for scramblase activity. Interacts with ARMC12 in a TBC1D21-dependent manner. Interacts with KLC3. Interacts with SPATA33. Interacts with PPP3CC in a SPATA33-dependent manner. In terms of processing, ubiquitinated by PRKN during mitophagy, leading to its degradation and enhancement of mitophagy. Deubiquitinated by USP30. In terms of tissue distribution, highest levels of expression detected in testis, less but still abundant expression in heart, kidney, brain, and skeletal muscle. Expressed in the sperm midpiece (at protein level).

The protein localises to the mitochondrion outer membrane. The protein resides in the membrane. It catalyses the reaction chloride(in) = chloride(out). It carries out the reaction K(+)(in) = K(+)(out). The enzyme catalyses a 1,2-diacyl-sn-glycero-3-phospho-L-serine(in) = a 1,2-diacyl-sn-glycero-3-phospho-L-serine(out). The catalysed reaction is a 1,2-diacyl-sn-glycero-3-phosphocholine(in) = a 1,2-diacyl-sn-glycero-3-phosphocholine(out). It catalyses the reaction a 1,2-diacyl-sn-glycero-3-phospho-(1D-myo-inositol)(in) = a 1,2-diacyl-sn-glycero-3-phospho-(1D-myo-inositol)(out). Functionally, non-selective voltage-gated ion channel that mediates the transport of anions and cations through the mitochondrion outer membrane and plasma membrane. The channel adopts an open conformation at zero mV and a closed conformation at both positive and negative potentials. There are two populations of channels; the main that functions in a lower open-state conductance with lower ion selectivity, that switch, in a voltage-dependent manner, from the open to a low-conducting 'closed' state and the other that has a normal ion selectivity in the typical high conductance, 'open' state. Binds various lipids, including the sphingolipid ceramide, the phospholipid phosphatidylcholine, and the sterols cholesterol and oxysterol. Binding of ceramide promotes the mitochondrial outer membrane permeabilization (MOMP) apoptotic pathway. Catalyzes the scrambling of phospholipids across the outer mitochondrial membrane; the mechanism is unrelated to channel activity and is capable of translocating both anionic and zwitterionic phospholipids. The protein is Non-selective voltage-gated ion channel VDAC2 of Mus musculus (Mouse).